Reading from the N-terminus, the 276-residue chain is Vitamin B12-binding protein (276 aa).

Positions Met-1–Ala-20 are cleaved as a signal peptide. The 248-residue stretch at Arg-27–Gln-274 folds into the Fe/B12 periplasmic-binding domain. Tyr-54 is a binding site for cyanocob(III)alamin. Cys-187 and Cys-267 are disulfide-bonded.

The protein belongs to the BtuF family. The complex is composed of two ATP-binding proteins (BtuD), two transmembrane proteins (BtuC) and a solute-binding protein (BtuF).

The protein resides in the periplasm. Part of the ABC transporter complex BtuCDF involved in vitamin B12 import. Binds vitamin B12 and delivers it to the periplasmic surface of BtuC. In Vibrio cholerae serotype O1 (strain ATCC 39541 / Classical Ogawa 395 / O395), this protein is Vitamin B12-binding protein.